We begin with the raw amino-acid sequence, 127 residues long: Aspartate 1-decarboxylase (127 aa).

The active-site Schiff-base intermediate with substrate; via pyruvic acid is the Ser25. A Pyruvic acid (Ser) modification is found at Ser25. Residue Thr57 participates in substrate binding. Tyr58 (proton donor) is an active-site residue. Residue 73–75 participates in substrate binding; it reads GAA.

It belongs to the PanD family. In terms of assembly, heterooctamer of four alpha and four beta subunits. It depends on pyruvate as a cofactor. Is synthesized initially as an inactive proenzyme, which is activated by self-cleavage at a specific serine bond to produce a beta-subunit with a hydroxyl group at its C-terminus and an alpha-subunit with a pyruvoyl group at its N-terminus.

It is found in the cytoplasm. The enzyme catalyses L-aspartate + H(+) = beta-alanine + CO2. Its pathway is cofactor biosynthesis; (R)-pantothenate biosynthesis; beta-alanine from L-aspartate: step 1/1. Catalyzes the pyruvoyl-dependent decarboxylation of aspartate to produce beta-alanine. The protein is Aspartate 1-decarboxylase of Bacillus cereus (strain 03BB102).